The sequence spans 387 residues: MKVSELNLKAKSLLEFHLDDIELSGEISKITIHGSGHWYFDLKDEKSSIACVMFKGFNQFVQTQPKVGDMLDLRGYVSLYEASGRYQFIAKSMQKTSLGDLEAKFLALKEKLEKEGLFDINAKKSIVKFPKKIGIITSFTSAALQDMLKLISQKEYNLCKITIFNALTQGQSAPNSLINALKKANEYDLDAIILARGGGSREDLFCFNDEELARCIFSLKTPVVSAIGHEIDYVISDFVADLRAPTPSAAIDMIFPNKLSLEQGLDELTMRFKSQMLNHLKFYQNKIDHLQNLAKAKSLENAFFLRKQKLDFLQSQLKSVLNLKLLNYENKLNNFEELLAQHKNFFDKSKNLINLQKDGKNISLEKLKKGDIIKLCSINESKEAQIL.

Belongs to the XseA family. In terms of assembly, heterooligomer composed of large and small subunits.

Its subcellular location is the cytoplasm. It catalyses the reaction Exonucleolytic cleavage in either 5'- to 3'- or 3'- to 5'-direction to yield nucleoside 5'-phosphates.. Bidirectionally degrades single-stranded DNA into large acid-insoluble oligonucleotides, which are then degraded further into small acid-soluble oligonucleotides. The sequence is that of Exodeoxyribonuclease 7 large subunit from Campylobacter lari (strain RM2100 / D67 / ATCC BAA-1060).